The sequence spans 90 residues: DNA-binding protein HU (90 aa).

The protein belongs to the bacterial histone-like protein family. In terms of assembly, homodimer.

Histone-like DNA-binding protein which is capable of wrapping DNA to stabilize it, and thus to prevent its denaturation under extreme environmental conditions. The polypeptide is DNA-binding protein HU (hup) (Pasteurella multocida (strain Pm70)).